Reading from the N-terminus, the 221-residue chain is Probable transaldolase (221 aa).

K83 serves as the catalytic Schiff-base intermediate with substrate.

Belongs to the transaldolase family. Type 3B subfamily.

The protein localises to the cytoplasm. It catalyses the reaction D-sedoheptulose 7-phosphate + D-glyceraldehyde 3-phosphate = D-erythrose 4-phosphate + beta-D-fructose 6-phosphate. The protein operates within carbohydrate degradation; pentose phosphate pathway; D-glyceraldehyde 3-phosphate and beta-D-fructose 6-phosphate from D-ribose 5-phosphate and D-xylulose 5-phosphate (non-oxidative stage): step 2/3. Functionally, transaldolase is important for the balance of metabolites in the pentose-phosphate pathway. This chain is Probable transaldolase, found in Petrotoga mobilis (strain DSM 10674 / SJ95).